Consider the following 243-residue polypeptide: Nuclear protein UL4 homolog (243 aa).

Residues 193–226 (RPDDQTTPTPTPHQYTSQRRQPETNCPSPQPAFF) are disordered. Positions 205–219 (HQYTSQRRQPETNCP) are enriched in polar residues.

Belongs to the alphaherpesvirinae HHV-1 UL4 family.

The protein resides in the host nucleus. This is Nuclear protein UL4 homolog from Varicella-zoster virus (strain Oka vaccine) (HHV-3).